The primary structure comprises 233 residues: Nickel import system ATP-binding protein NikE (233 aa).

The ABC transporter domain maps to 2–228 (IELKHVTFGY…DRHSYTKELV (227 aa)). An ATP-binding site is contributed by 35–42 (GESGCGKS).

The protein belongs to the ABC transporter superfamily. The complex is composed of two ATP-binding proteins (NikD and NikE), two transmembrane proteins (NikB and NikC) and a solute-binding protein (NikA).

It is found in the cell membrane. The enzyme catalyses Ni(2+)(out) + ATP + H2O = Ni(2+)(in) + ADP + phosphate + H(+). Its function is as follows. Part of the ABC transporter complex NikABCDE (Opp2) involved in nickel import. Probably responsible for energy coupling to the transport system. This Staphylococcus aureus (strain bovine RF122 / ET3-1) protein is Nickel import system ATP-binding protein NikE.